Reading from the N-terminus, the 164-residue chain is Phosphopantetheine adenylyltransferase (164 aa).

Ser-9 contacts substrate. ATP-binding positions include 9–10 (SF) and His-17. Substrate-binding residues include Lys-41, Val-78, and Arg-92. Residues 93-95 (GLR), Glu-103, and 128-134 (SRPITAT) contribute to the ATP site.

Belongs to the bacterial CoaD family. In terms of assembly, homohexamer. It depends on Mg(2+) as a cofactor.

The protein localises to the cytoplasm. It carries out the reaction (R)-4'-phosphopantetheine + ATP + H(+) = 3'-dephospho-CoA + diphosphate. It functions in the pathway cofactor biosynthesis; coenzyme A biosynthesis; CoA from (R)-pantothenate: step 4/5. Its function is as follows. Reversibly transfers an adenylyl group from ATP to 4'-phosphopantetheine, yielding dephospho-CoA (dPCoA) and pyrophosphate. The sequence is that of Phosphopantetheine adenylyltransferase from Rhizobium leguminosarum bv. trifolii (strain WSM2304).